A 284-amino-acid polypeptide reads, in one-letter code: Ribosomal RNA small subunit methyltransferase A (284 aa).

S-adenosyl-L-methionine-binding residues include Asn-28, Leu-30, Gly-55, Glu-77, Asp-103, and Asn-123.

Belongs to the class I-like SAM-binding methyltransferase superfamily. rRNA adenine N(6)-methyltransferase family. RsmA subfamily.

The protein localises to the cytoplasm. The enzyme catalyses adenosine(1518)/adenosine(1519) in 16S rRNA + 4 S-adenosyl-L-methionine = N(6)-dimethyladenosine(1518)/N(6)-dimethyladenosine(1519) in 16S rRNA + 4 S-adenosyl-L-homocysteine + 4 H(+). In terms of biological role, specifically dimethylates two adjacent adenosines (A1518 and A1519) in the loop of a conserved hairpin near the 3'-end of 16S rRNA in the 30S particle. May play a critical role in biogenesis of 30S subunits. In Bradyrhizobium diazoefficiens (strain JCM 10833 / BCRC 13528 / IAM 13628 / NBRC 14792 / USDA 110), this protein is Ribosomal RNA small subunit methyltransferase A.